A 271-amino-acid chain; its full sequence is Aquaporin-1 (271 aa).

Residues 1 to 11 (MASEFKKKLFW) are Cytoplasmic-facing. Residues 12–29 (RAVVAEFLAMILFVFISI) form a helical membrane-spanning segment. Residues 30–48 (GSALGFNYPVRNNQTAGAA) lie on the Extracellular side of the membrane. N-linked (GlcNAc...) asparagine glycosylation occurs at Asn42. A helical membrane pass occupies residues 49-67 (QDNVKVSLAFGLSIATLAQ). Residues 68 to 70 (SVG) lie on the Cytoplasmic side of the membrane. An intramembrane segment occupies 71–84 (HISGAHLNPAVTLG). Residues 78-80 (NPA) carry the NPA 1 motif. The Cytoplasmic segment spans residues 85–92 (LLLSCQIS). Residues 93 to 111 (ILRAVMYIIAQCVGAIVAT) form a helical membrane-spanning segment. Topologically, residues 112-135 (AILSGITSSLPDNSLGRNELAPGV) are extracellular. Residues 136–155 (NSGQGLGIEIIGTLQLVLCV) traverse the membrane as a helical segment. At 156–165 (LATTDRRRRD) the chain is on the cytoplasmic side. The chain crosses the membrane as a helical span at residues 166–183 (LGGSGPLAIGLSVALGHL). Over 184–188 (LAIDY) the chain is Extracellular. An intramembrane segment occupies 189–201 (TGCGINPARSFGS). Residues 194 to 196 (NPA) carry the NPA 2 motif. Residues 202–208 (SVITHNF) are Extracellular-facing. A helical transmembrane segment spans residues 209-226 (KDHWIFWVGPFIGGALAV). The Cytoplasmic portion of the chain corresponds to 227–271 (LIYDFILAPRSSDLTDRVKVWTSGQVEEYELDGDDINSRVEMKPK). Position 249 is a phosphoserine (Ser249). Tyr255 is subject to Phosphotyrosine. Ser264 carries the phosphoserine modification.

The protein belongs to the MIP/aquaporin (TC 1.A.8) family. In terms of assembly, homotetramer; each monomer provides an independent water pore. Component of the ankyrin-1 complex in the erythrocyte, composed of ANK1, RHCE, RHAG, SLC4A1, EPB42, GYPA, GYPB and AQP1. Interacts with EPHB2; involved in endolymph production in the inner ear. Identified in a complex with STOM. Interacts (via the N-terminal) with ANK1 (via ANK 1-5 repeats). Interacts (via the C-terminal) with EPB42.

The protein resides in the cell membrane. The enzyme catalyses H2O(in) = H2O(out). It catalyses the reaction nitric oxide(out) = nitric oxide(in). It carries out the reaction CO2(out) = CO2(in). The catalysed reaction is glycerol(in) = glycerol(out). The enzyme catalyses H2O2(out) = H2O2(in). It catalyses the reaction K(+)(in) = K(+)(out). It carries out the reaction Na(+)(in) = Na(+)(out). Its function is as follows. Forms a water channel that facilitates the transport of water across cell membranes, playing a crucial role in water homeostasis in various tissues. Could also be permeable to small solutes including hydrogen peroxide, glycerol and gases such as amonnia (NH3), nitric oxide (NO) and carbon dioxide (CO2). Recruited to the ankyrin-1 complex, a multiprotein complex of the erythrocyte membrane, it could be part of a CO2 metabolon, linking facilitated diffusion of CO2 across the membrane, anion exchange of Cl(-)/HCO3(-) and interconversion of dissolved CO2 and carbonic acid in the cytosol. In vitro, it shows non-selective gated cation channel activity and may be permeable to cations like K(+) and Na(+) in vivo. In Canis lupus familiaris (Dog), this protein is Aquaporin-1.